A 453-amino-acid polypeptide reads, in one-letter code: Choline kinase alpha (453 aa).

Residues 22–81 (CGGNAAPTPGVGQQRDAAGELESKQLGGRTQPLALPPPPPPPLPLPPPPSPPLADEQPEP) form a disordered region. Residues 55 to 73 (ALPPPPPPPLPLPPPPSPP) show a composition bias toward pro residues. At Ser-71 the chain carries Phosphoserine. ATP-binding positions include 113 to 119 (RGGLSNM), Arg-142, and 203 to 209 (QFIPSRR). A phosphocholine-binding site is contributed by 115 to 117 (GLS). The residue at position 243 (Lys-243) is an N6-acetyllysine. Ser-275 carries the phosphoserine modification. Residues Gln-304 and Asp-326 each contribute to the ATP site.

Belongs to the choline/ethanolamine kinase family. In terms of assembly, homodimer. Heterodimer with CHKB. Monomer; acetylation by KAT5 promotes dissociation of the homodimer and monomerization. In terms of processing, phosphorylated at Ser-275 by AMPK in response to glucose deprivation, leading to localization to lipid droplets. Post-translationally, acetylated by KAT5 at Lys-243 following phosphorylation by AMPK, leading to monomerization and conversion into a tyrosine-protein kinase. In terms of tissue distribution, expressed ubiquitously with the highest level in testis.

The protein resides in the cytoplasm. It localises to the cytosol. It is found in the lipid droplet. The catalysed reaction is choline + ATP = phosphocholine + ADP + H(+). The enzyme catalyses ethanolamine + ATP = phosphoethanolamine + ADP + H(+). It carries out the reaction L-tyrosyl-[protein] + ATP = O-phospho-L-tyrosyl-[protein] + ADP + H(+). It participates in phospholipid metabolism; phosphatidylcholine biosynthesis; phosphocholine from choline: step 1/1. The protein operates within phospholipid metabolism; phosphatidylethanolamine biosynthesis; phosphatidylethanolamine from ethanolamine: step 1/3. Its function is as follows. Plays a key role in phospholipid biosynthesis by catalyzing the phosphorylation of free choline to phosphocholine, the first step in phosphatidylcholine biosynthesis. Also phosphorylates ethanolamine, thereby contributing to phosphatidylethanolamine biosynthesis. Has higher activity with choline. In terms of biological role, this isoform plays a key role in lipolysis of lipid droplets following glucose deprivation. In response to glucose deprivation, phosphorylated by AMPK, promoting localization to lipid droplets. Phosphorylation is followed by acetylation by KAT5, leading to dissociation of the homodimer into a monomer. Monomeric CHKA isoform 1 is converted into a tyrosine-protein kinase, which phosphorylates lipid droplet structural proteins PLIN2 and PLIN3, leading to lipolysis of lipid droplets. In Mus musculus (Mouse), this protein is Choline kinase alpha (Chka).